The following is an 867-amino-acid chain: Programmed cell death 6-interacting protein (867 aa).

The region spanning 3–391 (TFISVPLKKT…AQMRDATIFA (389 aa)) is the BRO1 domain. 2 disordered regions span residues 714–809 (REPS…PYPS) and 835–867 (IPPY…FPPQ). Positions 729-744 (SAPSSISTNIATSSIP) are enriched in low complexity. Residues 756–766 (QPPPRPPPPAM) are compositionally biased toward pro residues. Positions 767-791 (PSASPVPASAAQASNPAPTAAADSS) are enriched in low complexity. A compositionally biased stretch (polar residues) spans 792-803 (QPPSNTIPSQAQ). Low complexity predominate over residues 852–861 (QQPSFSYPQQ).

Post-translationally, phosphorylated on tyrosine residues.

It localises to the cytoplasm. The protein resides in the cytosol. It is found in the melanosome. The protein localises to the cytoskeleton. Its subcellular location is the microtubule organizing center. It localises to the centrosome. The protein resides in the secreted. It is found in the extracellular exosome. The protein localises to the cell junction. Its subcellular location is the tight junction. It localises to the midbody. The protein resides in the midbody ring. Multifunctional protein that may be involved in endocytosis, multivesicular body biogenesis, membrane repair, cytokinesis, apoptosis and maintenance of tight junction integrity. Class E VPS protein involved in concentration and sorting of cargo proteins of the multivesicular body (MVB) for incorporation into intralumenal vesicles that are generated by invagination and scission from the limiting membrane of the endosome. Binds to the phospholipid lysobisphosphatidic acid (LBPA) which is abundant in MVBs internal membranes. May play a role in the regulation of both apoptosis and cell proliferation. Regulates exosome biogenesis in concert with SDC1/4 and SDCBP. Ensures the proper assembly and positioning of actomyosin-tight junction complex at the apical sides of adjacent epithelial cells that defines a spatial membrane domain essential for the maintenance of epithelial cell polarity and barrier. The polypeptide is Programmed cell death 6-interacting protein (pdcd6ip) (Xenopus laevis (African clawed frog)).